The primary structure comprises 123 residues: Large ribosomal subunit protein uL14c (123 aa).

This sequence belongs to the universal ribosomal protein uL14 family. As to quaternary structure, part of the 50S ribosomal subunit.

The protein resides in the plastid. Its subcellular location is the chloroplast. In terms of biological role, binds to 23S rRNA. In Brachypodium distachyon (Purple false brome), this protein is Large ribosomal subunit protein uL14c.